A 450-amino-acid chain; its full sequence is tRNA modification GTPase MnmE (450 aa).

(6S)-5-formyl-5,6,7,8-tetrahydrofolate contacts are provided by Arg21, Glu80, and Lys119. Residues 213-373 (GIKVVIIGKP…LEEEIIKSVK (161 aa)) form the TrmE-type G domain. K(+) is bound at residue Asn223. Residues 223–228 (NVGKST), 242–248 (TDIPGTT), and 267–270 (DTAG) contribute to the GTP site. Ser227 lines the Mg(2+) pocket. Positions 242, 244, and 247 each coordinate K(+). Residue Thr248 participates in Mg(2+) binding. Lys450 contributes to the (6S)-5-formyl-5,6,7,8-tetrahydrofolate binding site.

This sequence belongs to the TRAFAC class TrmE-Era-EngA-EngB-Septin-like GTPase superfamily. TrmE GTPase family. In terms of assembly, homodimer. Heterotetramer of two MnmE and two MnmG subunits. The cofactor is K(+).

It localises to the cytoplasm. Its function is as follows. Exhibits a very high intrinsic GTPase hydrolysis rate. Involved in the addition of a carboxymethylaminomethyl (cmnm) group at the wobble position (U34) of certain tRNAs, forming tRNA-cmnm(5)s(2)U34. In Pseudothermotoga lettingae (strain ATCC BAA-301 / DSM 14385 / NBRC 107922 / TMO) (Thermotoga lettingae), this protein is tRNA modification GTPase MnmE.